Here is a 94-residue protein sequence, read N- to C-terminus: Phosphoribosyl-ATP pyrophosphatase (94 aa).

This sequence belongs to the PRA-PH family.

It localises to the cytoplasm. It catalyses the reaction 1-(5-phospho-beta-D-ribosyl)-ATP + H2O = 1-(5-phospho-beta-D-ribosyl)-5'-AMP + diphosphate + H(+). It participates in amino-acid biosynthesis; L-histidine biosynthesis; L-histidine from 5-phospho-alpha-D-ribose 1-diphosphate: step 2/9. This chain is Phosphoribosyl-ATP pyrophosphatase, found in Saccharolobus islandicus (strain M.16.27) (Sulfolobus islandicus).